A 427-amino-acid chain; its full sequence is Serine--tRNA ligase 2 (427 aa).

Basic and acidic residues predominate over residues 35-53; that stretch reads RRRSEAQAEVTRLRTELNR. A disordered region spans residues 35–72; it reads RRRSEAQAEVTRLRTELNRTSRARGRSGPPSEEEKEAA. L-serine is bound at residue 230-232; that stretch reads TAE. Residue 261–263 coordinates ATP; it reads RAE. L-serine is bound at residue glutamate 284. An ATP-binding site is contributed by 348 to 351; it reads EISS. Serine 383 contacts L-serine.

It belongs to the class-II aminoacyl-tRNA synthetase family. Type-1 seryl-tRNA synthetase subfamily. In terms of assembly, homodimer. The tRNA molecule binds across the dimer.

It localises to the cytoplasm. It carries out the reaction tRNA(Ser) + L-serine + ATP = L-seryl-tRNA(Ser) + AMP + diphosphate + H(+). The catalysed reaction is tRNA(Sec) + L-serine + ATP = L-seryl-tRNA(Sec) + AMP + diphosphate + H(+). Its pathway is aminoacyl-tRNA biosynthesis; selenocysteinyl-tRNA(Sec) biosynthesis; L-seryl-tRNA(Sec) from L-serine and tRNA(Sec): step 1/1. Catalyzes the attachment of serine to tRNA(Ser). Is also able to aminoacylate tRNA(Sec) with serine, to form the misacylated tRNA L-seryl-tRNA(Sec), which will be further converted into selenocysteinyl-tRNA(Sec). This chain is Serine--tRNA ligase 2, found in Streptomyces avermitilis (strain ATCC 31267 / DSM 46492 / JCM 5070 / NBRC 14893 / NCIMB 12804 / NRRL 8165 / MA-4680).